The primary structure comprises 414 residues: Serine hydroxymethyltransferase (414 aa).

(6S)-5,6,7,8-tetrahydrofolate-binding positions include L121 and 125 to 127 (GHL). The residue at position 229 (K229) is an N6-(pyridoxal phosphate)lysine.

The protein belongs to the SHMT family. In terms of assembly, homodimer. The cofactor is pyridoxal 5'-phosphate.

It localises to the cytoplasm. It carries out the reaction (6R)-5,10-methylene-5,6,7,8-tetrahydrofolate + glycine + H2O = (6S)-5,6,7,8-tetrahydrofolate + L-serine. Its pathway is one-carbon metabolism; tetrahydrofolate interconversion. It participates in amino-acid biosynthesis; glycine biosynthesis; glycine from L-serine: step 1/1. In terms of biological role, catalyzes the reversible interconversion of serine and glycine with tetrahydrofolate (THF) serving as the one-carbon carrier. This reaction serves as the major source of one-carbon groups required for the biosynthesis of purines, thymidylate, methionine, and other important biomolecules. Also exhibits THF-independent aldolase activity toward beta-hydroxyamino acids, producing glycine and aldehydes, via a retro-aldol mechanism. The chain is Serine hydroxymethyltransferase from Herminiimonas arsenicoxydans.